Here is a 33-residue protein sequence, read N- to C-terminus: Gastrin (33 aa).

Residues 1–21 are disordered; it reads ELEPQGPPHLGTDLSKKQGPW. Glutamine 18 is subject to Pyrrolidone carboxylic acid. Tyrosine 28 carries the sulfotyrosine modification. A Phenylalanine amide modification is found at phenylalanine 33.

Belongs to the gastrin/cholecystokinin family.

Its subcellular location is the secreted. Functionally, gastrin stimulates the stomach mucosa to produce and secrete hydrochloric acid and the pancreas to secrete its digestive enzymes. It also stimulates smooth muscle contraction and increases blood circulation and water secretion in the stomach and intestine. The chain is Gastrin (GAST) from Chinchilla chinchilla (Short-tailed chinchilla).